The following is a 332-amino-acid chain: MSFLEQIIERAKSDVKTIVLPESTDLRVIKAASMIMKKGIAKVVLIGNEKEIKSLAGDIDLEGVMIEDSLNSEKLEDYANTLYELRKSKGMTIEAARETIKDPLYYGVMMVKKGEADGMVAGAVNSTANTLRPALQILKTAPGTKLVSSFFVMVVPNCEYGHNGTFVYADCGLVENPDADQLSEIAISASKSFEMLVGAKPQVAMLSYSSYGSAKSELTEKVIKATQLAKEKAPHLAIDGELQVDAAIVPEVAKSKAKGSSVAGKANVLIFPDLDAGNIAYKLTQRLAKAEAYGPITQGLARPVNDLSRGCSAEDIVGVAAITAVQAQYVKA.

Belongs to the phosphate acetyltransferase and butyryltransferase family.

The protein localises to the cytoplasm. The enzyme catalyses acetyl-CoA + phosphate = acetyl phosphate + CoA. The protein operates within metabolic intermediate biosynthesis; acetyl-CoA biosynthesis; acetyl-CoA from acetate: step 2/2. This Acetivibrio thermocellus (strain ATCC 27405 / DSM 1237 / JCM 9322 / NBRC 103400 / NCIMB 10682 / NRRL B-4536 / VPI 7372) (Clostridium thermocellum) protein is Phosphate acetyltransferase (pta).